The following is a 247-amino-acid chain: tRNA pseudouridine synthase A (247 aa).

Asp-53 serves as the catalytic Nucleophile. Tyr-111 is a substrate binding site.

Belongs to the tRNA pseudouridine synthase TruA family. Homodimer.

It carries out the reaction uridine(38/39/40) in tRNA = pseudouridine(38/39/40) in tRNA. Its function is as follows. Formation of pseudouridine at positions 38, 39 and 40 in the anticodon stem and loop of transfer RNAs. In Bacillus pumilus (strain SAFR-032), this protein is tRNA pseudouridine synthase A.